A 336-amino-acid polypeptide reads, in one-letter code: uncharacterized protein (336 aa).

29-36 (GPKSSGKS) provides a ligand contact to ATP.

It belongs to the archaeal ATPase family.

This is an uncharacterized protein from Methanocaldococcus jannaschii (strain ATCC 43067 / DSM 2661 / JAL-1 / JCM 10045 / NBRC 100440) (Methanococcus jannaschii).